Reading from the N-terminus, the 488-residue chain is MAGDVEGFSSSIHDTSVSAGFRALYEEGLLLDVTLVIEDHQFQAHKALLATQSDYFRIMFTADMRERDQDKIHLKGLTATGFSHVLQFMYYGTIELSMNTVHEILQAAMYVQLIEVVKFCCSFLLAKICLENCAEIMRLLDDFSVNIEGVREKLDSFLLENFVPLMSRPDFLSYLSFEKLMSYLDNDHLSRFPEIELYEAVQAWLRHDRRRWRHTDTIIQNIRFCLMTPSSVFEKVKTSEFYRYSRQLRHEVDQAMNYFHSVHQQPLMEMKSNKIRSAKPQTAVFRGMIGHSMVNSKILLLHKPRVWWELEGPQVPLRPDCLAIVNNFVFLLGGEELGPDGEFHASSKVFRYDPRQNTWLRMADMSVPRSEFAVGVIGRYVYAVAGRTRDETFYSTERYDITEDKWEFVDPYPVNKYGHEGTVLGNKLYITGGITSSSTSKQVCVFDPSKEGTVEQRTRRTQVATNCWENKCKMNYARCFHKMISYNA.

A BTB domain is found at 31–98 (LDVTLVIEDH…MYYGTIELSM (68 aa)). In terms of domain architecture, BACK spans 133 to 237 (CAEIMRLLDD…TPSSVFEKVK (105 aa)). 3 Kelch repeats span residues 328–379 (FVFL…VIGR), 381–426 (VYAV…VLGN), and 428–473 (LYIT…NKCK).

Homodimer. Interacts with CUL3.

It is found in the nucleus. Its pathway is protein modification; protein ubiquitination. Its function is as follows. Substrate-specific adapter for CUL3 E3 ubiquitin-protein ligase complex. This chain is Kelch-like protein 15 (KLHL15), found in Gallus gallus (Chicken).